The following is a 219-amino-acid chain: Ribose-5-phosphate isomerase A (219 aa).

Substrate is bound by residues 28–31, 81–84, and 94–97; these read TGST, DGAD, and KGGG. The Proton acceptor role is filled by glutamate 103. Residue lysine 121 participates in substrate binding.

This sequence belongs to the ribose 5-phosphate isomerase family. In terms of assembly, homodimer.

The catalysed reaction is aldehydo-D-ribose 5-phosphate = D-ribulose 5-phosphate. The protein operates within carbohydrate degradation; pentose phosphate pathway; D-ribose 5-phosphate from D-ribulose 5-phosphate (non-oxidative stage): step 1/1. Catalyzes the reversible conversion of ribose-5-phosphate to ribulose 5-phosphate. The polypeptide is Ribose-5-phosphate isomerase A (Photorhabdus laumondii subsp. laumondii (strain DSM 15139 / CIP 105565 / TT01) (Photorhabdus luminescens subsp. laumondii)).